The chain runs to 292 residues: Glycine--tRNA ligase alpha subunit (292 aa).

The protein belongs to the class-II aminoacyl-tRNA synthetase family. As to quaternary structure, tetramer of two alpha and two beta subunits.

The protein resides in the cytoplasm. It catalyses the reaction tRNA(Gly) + glycine + ATP = glycyl-tRNA(Gly) + AMP + diphosphate. This Pelotomaculum thermopropionicum (strain DSM 13744 / JCM 10971 / SI) protein is Glycine--tRNA ligase alpha subunit.